The primary structure comprises 278 residues: Glycyl-dTMP PLP-dependent decarboxylase (278 aa).

It belongs to the pyridoxal-phosphate-dependent aminodecarboxylase family.

It catalyses the reaction 5-C(alpha)-glycyl-dTMP in DNA + H(+) = 5-aminoethyl-dUMP in DNA + CO2. Functionally, converts 5-Calpha-glycinylthymidine (Calpha-GlyT) into 5-aminoethyl-2'-deoxyuridine (5-NedU) as a step in the pathway leading to thymidine hypermodifications in the viral genome. As a final result of the pathway of hypermodification, 5-aminoethyl-2'-deoxyuridine (5-NedU) substitutes for about 30% of thymidines in the viral DNA. These modifications probably prevent degradation of viral genome by the host restriction-modification antiviral defense system. This chain is Glycyl-dTMP PLP-dependent decarboxylase, found in Pseudomonas aeruginosa.